Reading from the N-terminus, the 304-residue chain is Acetylglutamate kinase (304 aa).

Substrate-binding positions include 75-76, Arg97, and Asn202; that span reads GG.

It belongs to the acetylglutamate kinase family. ArgB subfamily.

The protein resides in the cytoplasm. It carries out the reaction N-acetyl-L-glutamate + ATP = N-acetyl-L-glutamyl 5-phosphate + ADP. Its pathway is amino-acid biosynthesis; L-arginine biosynthesis; N(2)-acetyl-L-ornithine from L-glutamate: step 2/4. In terms of biological role, catalyzes the ATP-dependent phosphorylation of N-acetyl-L-glutamate. The protein is Acetylglutamate kinase of Parvibaculum lavamentivorans (strain DS-1 / DSM 13023 / NCIMB 13966).